The sequence spans 80 residues: Bacteriochlorophyll c-binding protein (80 aa).

Position 25 (His25) interacts with a bacteriochlorophyll c. The tract at residues 49-80 (PGVSRSGSGEGAFSSSPSNGFRPKRIRSRFNR) is disordered. A propeptide spanning residues 54 to 80 (SGSGEGAFSSSPSNGFRPKRIRSRFNR) is cleaved from the precursor. Positions 70 to 80 (RPKRIRSRFNR) are enriched in basic residues.

Belongs to the BChl C/E-binding protein family.

It localises to the chlorosome. The protein localises to the chlorosome envelope. In terms of biological role, component of the photosynthetic apparatus. The light harvesting B740 complex binds bacteriochlorophyll c. The sequence is that of Bacteriochlorophyll c-binding protein (cmsA) from Chloroflexus aurantiacus (strain ATCC 29366 / DSM 635 / J-10-fl).